We begin with the raw amino-acid sequence, 405 residues long: Dematin (405 aa).

4 disordered regions span residues 1-30 (MERL…PSSI), 79-158 (PRSR…GSPQ), 173-192 (FPAA…TDYW), and 203-332 (TEWR…DRGN). Low complexity predominate over residues 11-29 (SPGSVSPSRDSSVPGSPSS). Phosphoserine is present on residues Ser16, Ser18, Ser26, Ser92, Ser96, Ser105, Ser110, Ser113, and Ser156. Residues 108-123 (IISQASAPRTTGTPRT) are compositionally biased toward polar residues. Residues 216–227 (EEEEEEEDDDSG) are compositionally biased toward acidic residues. The interval 224–308 (DDSGEEMKAL…SRLQSTEFSP (85 aa)) is interaction with RASGRF2. At Ser226 the chain carries Phosphoserine. Composition is skewed to basic and acidic residues over residues 228 to 242 (EEMK…EELS) and 252 to 261 (ILKEEMEKSL). Phosphoserine occurs at positions 269, 279, 289, 303, 315, 333, 372, and 383. The span at 276 to 322 (FHTSLHQGTSKSSSLPAYGRTTLSRLQSTEFSPSGSETGSPGLQNGE) shows a compositional bias: polar residues. Residues 337–405 (VLEQKIYPYE…NELKKKASLF (69 aa)) enclose the HP domain. Residue Ser403 is modified to Phosphoserine; by PKA.

Belongs to the villin/gelsolin family. In terms of assembly, monomeric (isoform 2); under reducing conditions. Self-associates. Exists under oxidizing condition as a trimer of two isoforms 2 and isoform 1 linked by disulfide bonds. Found in a complex with DMTN, F-actin and spectrin. Found in a complex with ADD2, DMTN and SLC2A1. Interacts with F-actin, ITPKB, RASGRF2 and spectrin. Isoform 2 interacts with SLC2A1 (via C-terminus cytoplasmic region). Isoform 1 and isoform 2 interact (phosphorylated form) with plasmodium berghei 14-3-3 protein; the interaction occurs in a PKA-dependent manner. In terms of processing, phosphorylated. Phosphorylation at Ser-403 by PKA causes the C-terminal headpiece domain to associate with the N-terminal core domain, and leads to the inhibition of its actin bundling activity. Post-translationally, the N-terminus is blocked. In terms of tissue distribution, expressed in platelets (at protein level). Expressed in heart, brain, lung, skeletal muscle, and kidney.

The protein resides in the cytoplasm. It is found in the cytosol. The protein localises to the perinuclear region. Its subcellular location is the cytoskeleton. It localises to the cell membrane. The protein resides in the membrane. It is found in the endomembrane system. The protein localises to the cell projection. In terms of biological role, membrane-cytoskeleton-associated protein with F-actin-binding activity that induces F-actin bundles formation and stabilization. Its F-actin-bundling activity is reversibly regulated upon its phosphorylation by the cAMP-dependent protein kinase A (PKA). Binds to the erythrocyte membrane glucose transporter-1 SLC2A1/GLUT1, and hence stabilizes and attaches the spectrin-actin network to the erythrocytic plasma membrane. Plays a role in maintaining the functional integrity of PKA-activated erythrocyte shape and the membrane mechanical properties. Also plays a role as a modulator of actin dynamics in fibroblasts; acts as a negative regulator of the RhoA activation pathway. In platelets, functions as a regulator of internal calcium mobilization across the dense tubular system that affects platelet granule secretion pathways and aggregation. Also required for the formation of a diverse set of cell protrusions, such as filopodia and lamellipodia, necessary for platelet cell spreading, motility and migration. Acts as a tumor suppressor and inhibits malignant cell transformation. The polypeptide is Dematin (DMTN) (Homo sapiens (Human)).